The following is a 173-amino-acid chain: Putative metal-dependent hydrolase BT9727_2476 (173 aa).

Residues His-65, His-156, and His-160 each contribute to the Zn(2+) site.

It belongs to the metal hydrolase YfiT family. As to quaternary structure, homodimer. Zn(2+) is required as a cofactor.

It localises to the cytoplasm. Its function is as follows. Possible metal-dependent hydrolase. This Bacillus thuringiensis subsp. konkukian (strain 97-27) protein is Putative metal-dependent hydrolase BT9727_2476.